Here is a 501-residue protein sequence, read N- to C-terminus: Tetrachloroethene reductive dehalogenase (501 aa).

A signal peptide (tat-type signal) is located at residues M1 to A37. Residues A74, Y207, N309 to S314, M329 to C332, and V341 to L343 each bind corrinoid. Residues K356–R386 form the 4Fe-4S ferredoxin-type 1 domain. Residues C366, C369, C372, and C376 each contribute to the [4Fe-4S] cluster site. A corrinoid-binding site is contributed by H394–Q401. Residue C409 participates in [4Fe-4S] cluster binding. A corrinoid-binding site is contributed by Y419. Residues C420, C423, and C427 each coordinate [4Fe-4S] cluster. The 4Fe-4S ferredoxin-type 2 domain occupies C420–G439.

Belongs to the PceA family. In terms of assembly, monomer. [4Fe-4S] cluster serves as cofactor. Requires corrinoid as cofactor. In terms of processing, predicted to be exported by the Tat system. The position of the signal peptide cleavage has not been experimentally proven.

It localises to the cytoplasm. Its subcellular location is the cell inner membrane. It catalyses the reaction trichloroethene + chloride + A + H(+) = tetrachloroethene + AH2. The enzyme catalyses trichloroethene + AH2 = (Z)-1,2-dichloroethene + chloride + A + H(+). Both the processed and unprocessed enzymes are catalytically active. PCE-dependent growth and PceA activity are inhibited in the presence of high concentrations of 5,6-dimethylbenzimidazole (DMB), probably due to the formation a DMB-containing nor-B12 cofactor. Dechlorination of PCE is stimulated by ammonium ions. Activity is inhibited by chlorinated methanes. Catalyzes the reductive dechlorination of tetrachloroethene (PCE) to trichloroethene (TCE) and of trichloroethene to cis-1,2-dichloroethene (DCE). In addition, trans-1,3-dichloropropene, 1,1,3-trichloropropene and 2,3-dichloropropene are reduced to a mixture of mono-chloropropenes, 1,1-dichloropropene, and 2-chloropropene, respectively. Is also able to convert brominated phenols such as 4-bromophenol (4-BP), 2,4-dibromophenol (2,4-DBP) and 2,4,6-tribromophenol (2,4,6-TBP). Utilizes formate or pyruvate as electron donors. Titanium(III) citrate could also serve as electron donor. Reduced methyl viologen can act as the artificial electron donor. This is Tetrachloroethene reductive dehalogenase from Sulfurospirillum multivorans (Dehalospirillum multivorans).